Consider the following 587-residue polypeptide: Ankyrin repeat and SOCS box protein 14 (587 aa).

11 ANK repeats span residues 82-112 (IGWI…SLWE), 117-146 (NGET…NPNA), 150-179 (EGNS…DVNL), 183-212 (NERT…HPDP), 216-245 (YGFT…IFCL), 248-277 (DSSS…DANI), 281-310 (SGHL…LAAI), 313-342 (SGIS…DVNF), 355-384 (HRKS…LPNQ), 385-414 (DPVN…NVNY), and 416-449 (CRVN…DTER). Residues 521–576 (WSEIHFILTNPRSLKHLCRLKIRKCMGRLHLRCPVFMSFLPLPNRLKAYVLYKEYD) enclose the SOCS box domain.

The protein belongs to the ankyrin SOCS box (ASB) family. As to quaternary structure, interacts with MAPRE2; this interaction promotes MAPRE2 degradation.

It participates in protein modification; protein ubiquitination. May be a substrate-recognition component of a SCF-like ECS (Elongin-Cullin-SOCS-box protein) E3 ubiquitin-protein ligase complex which mediates the ubiquitination and subsequent proteasomal degradation of target proteins. Plays a role in the inhibition of cardiomyocyte nuclear proliferation by mediating the ubiquitination and degradation of MAPRE2. This Homo sapiens (Human) protein is Ankyrin repeat and SOCS box protein 14 (ASB14).